A 402-amino-acid chain; its full sequence is FMN-dependent alpha-hydroxy acid dehydrogenase qulF (402 aa).

One can recognise an FMN hydroxy acid dehydrogenase domain in the interval 22-394 (RLPAITTNPT…NRDCMRRISY (373 aa)). Tyrosine 48 lines the a 2-oxocarboxylate pocket. FMN is bound by residues serine 130 and glutamine 152. A 2-oxocarboxylate contacts are provided by tyrosine 154 and arginine 189. Lysine 265 is an FMN binding site. Histidine 289 (proton acceptor) is an active-site residue. Arginine 292 contributes to the a 2-oxocarboxylate binding site. Residues 320–324 (DSGVR) and 343–344 (GR) contribute to the FMN site.

The protein belongs to the FMN-dependent alpha-hydroxy acid dehydrogenase family. It depends on FMN as a cofactor.

Functionally, FMN-dependent alpha-hydroxy acid dehydrogenase; part of the gene cluster that mediates the biosynthesis of quinolactacin A2 (QUL A2), a fungal alkaloid that features a quinolone-gamma-lactam hybrid, which is a potential pharmacophore for the treatment of cancer and Alzheimer's disease. The quinolone-gamma-lactam hybrid scaffold is synthesized from the combination of L-isoleucine (L-Ile) and the nonproteinogenic amino acid L-kynurenine, followed by quinolone cyclization, oxidative decarboxylation, and lactam formation. Additionally, the N-methyl group is derived from methionine, which might be catalyzed by an S-adenosylmethionine (SAM)-dependent methyltransferase. Bioconversion of L-tryptophan to L-kynurenine could be catalyzed by the indoleamine-2,3-dioxygenase (IDO) qulI to produce an unstable product, N-formyl-L-kynurenine, followed by kynurenine formamidase catalyzed hydrolysis. QulM then acts as a methyltransferase that methylates L-kynurenine at the N-4 position. The FMN-dependent alpha-hydroxy acid dehydrogenase qulF than functions as an oxidative decarboxylase which converts N-methylkynurenine into 2-aminobenzoylacetamide via 2 tandem reactions, including dehydrogenation and decarboxylation. An amidase located outside of the qul gene cluster further produces the unstable beta-keto acid precursor N-methyl-2-aminobenzoylacetate, which could be spontaneously dehydrated to form N-methyl-4-hydroxy-2-quinolone. The NRPS qulB is able to incorporate N-methyl-2-aminobenzoylacetate and efficiently compete with the spontaneous reaction. By further extending the beta-keto acid with L-Ile, qulA performs a Dieckmann condensation to form the gamma-lactam ring and release a 4-ketopyrrolidinone intermediate from the assembly line. This intermediate could plausibly further undergo a spontaneous cyclization to yield the final quinolone-gamma-lactam hybrid structure. The chain is FMN-dependent alpha-hydroxy acid dehydrogenase qulF from Penicillium citrinum.